The primary structure comprises 306 residues: C-type lectin domain family 10 member A (306 aa).

Topologically, residues 1–37 (MTMAYENFQNLGSEEKNQEAGKAPPQSFLCNILSWTH) are cytoplasmic. The chain crosses the membrane as a helical; Signal-anchor for type II membrane protein span at residues 38–58 (LLLFSLGLSLLLLVVISVIGS). The Extracellular segment spans residues 59–306 (QNSQLRRDLE…VCEMKLAKDS (248 aa)). Residues Asn76 and Asn168 are each glycosylated (N-linked (GlcNAc...) asparagine). One can recognise a C-type lectin domain in the interval 174 to 300 (CCPLHWMEHE…QRPYRWVCEM (127 aa)). Disulfide bonds link Cys175–Cys186, Cys203–Cys298, and Cys276–Cys290.

In terms of assembly, homooligomer.

The protein resides in the membrane. Its function is as follows. Recognizes terminal galactose and N-acetylgalactosamine units. The polypeptide is C-type lectin domain family 10 member A (Clec10a) (Rattus norvegicus (Rat)).